Reading from the N-terminus, the 352-residue chain is tRNA pseudouridine synthase D (352 aa).

Aspartate 81 (nucleophile) is an active-site residue. One can recognise a TRUD domain in the interval 157 to 303 (GVPNYFGLQR…MAHERRILRL (147 aa)).

It belongs to the pseudouridine synthase TruD family.

The catalysed reaction is uridine(13) in tRNA = pseudouridine(13) in tRNA. Responsible for synthesis of pseudouridine from uracil-13 in transfer RNAs. The polypeptide is tRNA pseudouridine synthase D (Ectopseudomonas mendocina (strain ymp) (Pseudomonas mendocina)).